We begin with the raw amino-acid sequence, 46 residues long: Large ribosomal subunit protein bL34c (46 aa).

The protein belongs to the bacterial ribosomal protein bL34 family.

It localises to the plastid. The protein localises to the chloroplast. The sequence is that of Large ribosomal subunit protein bL34c (rpl34) from Guillardia theta (Cryptophyte).